We begin with the raw amino-acid sequence, 366 residues long: 4-hydroxy-3-methylbut-2-en-1-yl diphosphate synthase (flavodoxin) (366 aa).

[4Fe-4S] cluster contacts are provided by C270, C273, C305, and E312.

The protein belongs to the IspG family. It depends on [4Fe-4S] cluster as a cofactor.

The enzyme catalyses (2E)-4-hydroxy-3-methylbut-2-enyl diphosphate + oxidized [flavodoxin] + H2O + 2 H(+) = 2-C-methyl-D-erythritol 2,4-cyclic diphosphate + reduced [flavodoxin]. The protein operates within isoprenoid biosynthesis; isopentenyl diphosphate biosynthesis via DXP pathway; isopentenyl diphosphate from 1-deoxy-D-xylulose 5-phosphate: step 5/6. In terms of biological role, converts 2C-methyl-D-erythritol 2,4-cyclodiphosphate (ME-2,4cPP) into 1-hydroxy-2-methyl-2-(E)-butenyl 4-diphosphate. This chain is 4-hydroxy-3-methylbut-2-en-1-yl diphosphate synthase (flavodoxin), found in Wigglesworthia glossinidia brevipalpis.